The primary structure comprises 340 residues: tRNA N6-adenosine threonylcarbamoyltransferase (340 aa).

Residues His115 and His119 each contribute to the Fe cation site. Residues Ile137–Gly141, Asp170, Gly183, Asp187, and Asn276 each bind substrate. A Fe cation-binding site is contributed by Asp304.

This sequence belongs to the KAE1 / TsaD family. Fe(2+) is required as a cofactor.

It is found in the cytoplasm. It carries out the reaction L-threonylcarbamoyladenylate + adenosine(37) in tRNA = N(6)-L-threonylcarbamoyladenosine(37) in tRNA + AMP + H(+). Functionally, required for the formation of a threonylcarbamoyl group on adenosine at position 37 (t(6)A37) in tRNAs that read codons beginning with adenine. Is involved in the transfer of the threonylcarbamoyl moiety of threonylcarbamoyl-AMP (TC-AMP) to the N6 group of A37, together with TsaE and TsaB. TsaD likely plays a direct catalytic role in this reaction. The polypeptide is tRNA N6-adenosine threonylcarbamoyltransferase (Staphylococcus epidermidis (strain ATCC 35984 / DSM 28319 / BCRC 17069 / CCUG 31568 / BM 3577 / RP62A)).